Reading from the N-terminus, the 300-residue chain is Inosose dehydratase (300 aa).

This sequence belongs to the IolE/MocC family. It depends on glutathione as a cofactor. Co(2+) serves as cofactor. Requires Mn(2+) as cofactor.

It carries out the reaction scyllo-inosose = 3D-3,5/4-trihydroxycyclohexane-1,2-dione + H2O. Functionally, catalyzes the dehydration of inosose (2-keto-myo-inositol, 2KMI or 2,4,6/3,5-pentahydroxycyclohexanone) to 3D-(3,5/4)-trihydroxycyclohexane-1,2-dione (D-2,3-diketo-4-deoxy-epi-inositol). This chain is Inosose dehydratase, found in Mesomycoplasma hyopneumoniae (strain J / ATCC 25934 / NCTC 10110) (Mycoplasma hyopneumoniae).